The sequence spans 420 residues: Glucose-1-phosphate adenylyltransferase (420 aa).

Alpha-D-glucose 1-phosphate is bound by residues Y107, G172, 187–188, and S205; that span reads EK.

Belongs to the bacterial/plant glucose-1-phosphate adenylyltransferase family. In terms of assembly, homotetramer.

The catalysed reaction is alpha-D-glucose 1-phosphate + ATP + H(+) = ADP-alpha-D-glucose + diphosphate. It functions in the pathway glycan biosynthesis; glycogen biosynthesis. Functionally, involved in the biosynthesis of ADP-glucose, a building block required for the elongation reactions to produce glycogen. Catalyzes the reaction between ATP and alpha-D-glucose 1-phosphate (G1P) to produce pyrophosphate and ADP-Glc. The polypeptide is Glucose-1-phosphate adenylyltransferase (Rhizobium etli (strain ATCC 51251 / DSM 11541 / JCM 21823 / NBRC 15573 / CFN 42)).